The chain runs to 304 residues: UDP-3-O-acyl-N-acetylglucosamine deacetylase (304 aa).

Residues His-78, His-237, and Asp-241 each contribute to the Zn(2+) site. His-264 (proton donor) is an active-site residue.

The protein belongs to the LpxC family. Requires Zn(2+) as cofactor.

It catalyses the reaction a UDP-3-O-[(3R)-3-hydroxyacyl]-N-acetyl-alpha-D-glucosamine + H2O = a UDP-3-O-[(3R)-3-hydroxyacyl]-alpha-D-glucosamine + acetate. The protein operates within glycolipid biosynthesis; lipid IV(A) biosynthesis; lipid IV(A) from (3R)-3-hydroxytetradecanoyl-[acyl-carrier-protein] and UDP-N-acetyl-alpha-D-glucosamine: step 2/6. Functionally, catalyzes the hydrolysis of UDP-3-O-myristoyl-N-acetylglucosamine to form UDP-3-O-myristoylglucosamine and acetate, the committed step in lipid A biosynthesis. In Xylella fastidiosa (strain 9a5c), this protein is UDP-3-O-acyl-N-acetylglucosamine deacetylase.